The sequence spans 104 residues: Thioredoxin 1 (104 aa).

In terms of domain architecture, Thioredoxin spans 2–104; that stretch reads VKIVTSQAEF…LKQLIEKYAA (103 aa). Residues Cys-30 and Cys-33 each act as nucleophile in the active site. A disulfide bridge connects residues Cys-30 and Cys-33.

The protein belongs to the thioredoxin family. The disulfide bond between Cys-30 and Cys-33 acts as a redox-active center and is reduced by thioredoxin reductase TRXR.

The protein localises to the cytoplasm. In terms of biological role, participates in various redox reactions through the reversible oxidation of its active center dithiol to a disulfide and catalyzes dithiol-disulfide exchange reactions. By modifying the redox status of targeted proteins, induces changes in their structure and activity. Reduces oxidized glutathione (GSSG), thereby acting as a backup for the glutathione redox system. Reduces nitroglutathione (GSNO), a compound involved in the transport of nitric oxide (NO). Also reduces oxidative stress by detoxifying hydrogen peroxide, tert-butyl hydroperoxide and cumene hydroperoxide. Activates ornithine aminotransferase OAT by reducing a disulfide bond in the substrate binding loop, thereby enhancing the affinity of OAT for its substrates. May reduce S-adenosyl-L-homocysteine hydrolase SAHH. The protein is Thioredoxin 1 of Plasmodium falciparum (isolate 3D7).